Here is a 342-residue protein sequence, read N- to C-terminus: Anthranilate phosphoribosyltransferase (342 aa).

5-phospho-alpha-D-ribose 1-diphosphate contacts are provided by residues Gly83, 86-87, Thr91, 93-96, 111-119, and Ser123; these read GD, NIST, and KHGGRSVSS. Gly83 is an anthranilate binding site. Residue Ser95 coordinates Mg(2+). Arg169 contacts anthranilate. Asp228 and Glu229 together coordinate Mg(2+).

The protein belongs to the anthranilate phosphoribosyltransferase family. As to quaternary structure, homodimer. It depends on Mg(2+) as a cofactor.

The enzyme catalyses N-(5-phospho-beta-D-ribosyl)anthranilate + diphosphate = 5-phospho-alpha-D-ribose 1-diphosphate + anthranilate. It functions in the pathway amino-acid biosynthesis; L-tryptophan biosynthesis; L-tryptophan from chorismate: step 2/5. In terms of biological role, catalyzes the transfer of the phosphoribosyl group of 5-phosphorylribose-1-pyrophosphate (PRPP) to anthranilate to yield N-(5'-phosphoribosyl)-anthranilate (PRA). In Laribacter hongkongensis (strain HLHK9), this protein is Anthranilate phosphoribosyltransferase.